A 393-amino-acid polypeptide reads, in one-letter code: NAD(P)H-quinone oxidoreductase subunit H, chloroplastic (393 aa).

The protein belongs to the complex I 49 kDa subunit family. NDH is composed of at least 16 different subunits, 5 of which are encoded in the nucleus.

Its subcellular location is the plastid. The protein localises to the chloroplast thylakoid membrane. It carries out the reaction a plastoquinone + NADH + (n+1) H(+)(in) = a plastoquinol + NAD(+) + n H(+)(out). The enzyme catalyses a plastoquinone + NADPH + (n+1) H(+)(in) = a plastoquinol + NADP(+) + n H(+)(out). NDH shuttles electrons from NAD(P)H:plastoquinone, via FMN and iron-sulfur (Fe-S) centers, to quinones in the photosynthetic chain and possibly in a chloroplast respiratory chain. The immediate electron acceptor for the enzyme in this species is believed to be plastoquinone. Couples the redox reaction to proton translocation, and thus conserves the redox energy in a proton gradient. This Morus indica (Mulberry) protein is NAD(P)H-quinone oxidoreductase subunit H, chloroplastic.